The chain runs to 145 residues: LIM domain only protein 3 (145 aa).

LIM zinc-binding domains follow at residues 11–73 (KGCA…LFGV) and 75–137 (GNCA…GLMK).

This is LIM domain only protein 3 (LMO3) from Bos taurus (Bovine).